The chain runs to 707 residues: Ribosomal RNA large subunit methyltransferase K/L (707 aa).

Positions 43–154 (QIYRCCLWSR…KDKAILGVDM (112 aa)) constitute a THUMP domain.

This sequence belongs to the methyltransferase superfamily. RlmKL family.

It localises to the cytoplasm. It catalyses the reaction guanosine(2445) in 23S rRNA + S-adenosyl-L-methionine = N(2)-methylguanosine(2445) in 23S rRNA + S-adenosyl-L-homocysteine + H(+). It carries out the reaction guanosine(2069) in 23S rRNA + S-adenosyl-L-methionine = N(2)-methylguanosine(2069) in 23S rRNA + S-adenosyl-L-homocysteine + H(+). Its function is as follows. Specifically methylates the guanine in position 2445 (m2G2445) and the guanine in position 2069 (m7G2069) of 23S rRNA. The protein is Ribosomal RNA large subunit methyltransferase K/L of Vibrio parahaemolyticus serotype O3:K6 (strain RIMD 2210633).